The primary structure comprises 128 residues: Prokineticin-2 (128 aa).

The N-terminal stretch at 1–27 (MRSSRCARLLLLLLLPPLLLTPPAGDA) is a signal peptide. 5 disulfides stabilise this stretch: cysteine 34-cysteine 46, cysteine 40-cysteine 58, cysteine 45-cysteine 106, cysteine 68-cysteine 114, and cysteine 108-cysteine 124. Residues 71 to 95 (MTRKNHFGNGRQERRKRKRRRKKKV) are disordered. Residues 83 to 95 (ERRKRKRRRKKKV) are compositionally biased toward basic residues.

This sequence belongs to the AVIT (prokineticin) family.

It localises to the secreted. May function as an output molecule from the suprachiasmatic nucleus (SCN) that transmits behavioral circadian rhythm. May also function locally within the SCN to synchronize output. Potently contracts gastrointestinal (GI) smooth muscle. This Bos taurus (Bovine) protein is Prokineticin-2 (PROK2).